The following is a 334-amino-acid chain: Homoserine O-acetyltransferase (334 aa).

In terms of domain architecture, AB hydrolase-1 spans 61-318 (LVLHALTGDS…GSIHGHDAFL (258 aa)). Ser-148 acts as the Nucleophile in catalysis. Arg-205 provides a ligand contact to substrate. Residues Asp-285 and His-314 contribute to the active site. Substrate is bound at residue Asp-315.

Belongs to the AB hydrolase superfamily. MetX family. In terms of assembly, homodimer.

It localises to the cytoplasm. It carries out the reaction L-homoserine + acetyl-CoA = O-acetyl-L-homoserine + CoA. The protein operates within amino-acid biosynthesis; L-methionine biosynthesis via de novo pathway; O-acetyl-L-homoserine from L-homoserine: step 1/1. In terms of biological role, transfers an acetyl group from acetyl-CoA to L-homoserine, forming acetyl-L-homoserine. In Deinococcus radiodurans (strain ATCC 13939 / DSM 20539 / JCM 16871 / CCUG 27074 / LMG 4051 / NBRC 15346 / NCIMB 9279 / VKM B-1422 / R1), this protein is Homoserine O-acetyltransferase.